The following is a 456-amino-acid chain: MFS-type transporter ppzB (456 aa).

The next 5 membrane-spanning stretches (helical) occupy residues 1 to 21 (MGLFTDLVLYGIVLPALPFIM), 38 to 58 (GFLATYAGASVFFSVPAGWAA), 72 to 92 (VFLFVATAIFAFSTSLALLVV), 125 to 145 (IGTIFATISVGELAAPVLGGV), and 154 to 174 (AVFAVSAVMLAIDLGLRGLVI). A disordered region spans residues 206-225 (EAQERTHEGTPLLPQDDDDD). Helical transmembrane passes span 255 to 275 (LAMLLSFVQALFIGTFDATVP), 284 to 304 (FSSLQVGLVFIALMLPYFALG), 318 to 338 (AAATSGYAFLVPCLLLLGLPE), 348 to 368 (VALFCTILALNGIGLAVVTSP), 398 to 418 (FGFSSLYFFTGLAVGPLLGGV), and 427 to 447 (VMGAVYAAISGVTAIVSFLFV).

It belongs to the major facilitator superfamily. TCR/Tet family.

It localises to the membrane. In terms of biological role, MFS-type transporter; part of the gene cluster that mediates the biosynthesis of pyrrolopyrazines, secondary metabolites showing insecticidal activity. Probably involved in the secretion of peramine and other pyrrolopyrazines. The chain is MFS-type transporter ppzB (ppzB) from Metarhizium majus (strain ARSEF 297).